Reading from the N-terminus, the 485-residue chain is UDP-N-acetylmuramate--L-alanine ligase (485 aa).

An ATP-binding site is contributed by 129 to 135; sequence GTHGKTT.

Belongs to the MurCDEF family.

It is found in the cytoplasm. The catalysed reaction is UDP-N-acetyl-alpha-D-muramate + L-alanine + ATP = UDP-N-acetyl-alpha-D-muramoyl-L-alanine + ADP + phosphate + H(+). It participates in cell wall biogenesis; peptidoglycan biosynthesis. Cell wall formation. The sequence is that of UDP-N-acetylmuramate--L-alanine ligase from Vibrio parahaemolyticus serotype O3:K6 (strain RIMD 2210633).